The sequence spans 257 residues: Zinc transporter ZupT (257 aa).

The next 8 helical transmembrane spans lie at 5–25, 32–52, 61–81, 109–129, 137–157, 171–191, 195–215, and 236–256; these read LILT…GVLG, LLAF…LMEM, GMSP…YLGL, AILL…ATFV, LGFG…LAVV, ILWA…AWLI, MISP…MVAL, and GVLC…TAGI. 2 residues coordinate Fe(2+): Asn-120 and Glu-123. Zn(2+) is bound by residues Glu-123 and His-148. Residues Asn-149, Glu-152, and Glu-181 each coordinate Fe(2+). Residue Glu-152 participates in Zn(2+) binding.

The protein belongs to the ZIP transporter (TC 2.A.5) family. ZupT subfamily.

Its subcellular location is the cell inner membrane. It carries out the reaction Zn(2+)(in) = Zn(2+)(out). In terms of biological role, mediates zinc uptake. May also transport other divalent cations. In Shigella dysenteriae serotype 1 (strain Sd197), this protein is Zinc transporter ZupT.